Here is a 335-residue protein sequence, read N- to C-terminus: G-protein coupled receptor 157 (335 aa).

Topologically, residues 1–15 (MQPSPPPTELVPSER) are extracellular. A helical transmembrane segment spans residues 16 to 36 (AVVLLSCALSALGSGLLVATH). The Cytoplasmic segment spans residues 37-48 (ALWPDLRSRARR). A helical membrane pass occupies residues 49–69 (LLLFLSLADLLSAASYFYGVL). At 70-87 (QNFAGPSWDCVLQGALST) the chain is on the extracellular side. The helical transmembrane segment at 88–108 (FANTSSFFWTVAIALYLYLSI) threads the bilayer. Topologically, residues 109–119 (VRAARGPRTDR) are cytoplasmic. Residues 120–140 (LLWAFHVVSWGVPLVITVAAV) form a helical membrane-spanning segment. At 141–166 (ALKKIGYDASDVSVGWCWIDLEAKDH) the chain is on the extracellular side. Residues 167–187 (VLWMLLTGKLWEMLAYVLLPL) traverse the membrane as a helical segment. Over 188 to 226 (LYLLVRKHINRAHTALSEYRPILSQEHRLLRHSSMADKK) the chain is Cytoplasmic. Residues 227 to 247 (LVLIPLIFIGLRVWSTVRFVL) form a helical membrane-spanning segment. Over 248 to 258 (TLCGSPAVQTP) the chain is Extracellular. A helical membrane pass occupies residues 259–279 (VLVVLHGIGNTFQGGANCIMF). The Cytoplasmic portion of the chain corresponds to 280–335 (VLCTRAVRTRLFSLCCCCCSSQPPTKSPAGTPKAPAPSKPGESQESQGTPGELPST). Residues 300–335 (SQPPTKSPAGTPKAPAPSKPGESQESQGTPGELPST) form a disordered region. Residues 320–335 (GESQESQGTPGELPST) are compositionally biased toward polar residues.

This sequence belongs to the G-protein coupled receptor 2 family.

The protein resides in the cell projection. It is found in the cilium membrane. Orphan receptor that promotes neuronal differentiation of radial glial progenitors (RGPs). The activity of this receptor is mediated by a G(q)-protein that activates a phosphatidylinositol-calcium second messenger. In Homo sapiens (Human), this protein is G-protein coupled receptor 157 (GPR157).